A 551-amino-acid chain; its full sequence is MKNTTNTKRTKFIFVTGGVLSSLGKGLAAASIGALLESRGLSITFQKLDPYINVDPGTMNPFQHGEVYVTDDGAETDLDMGHYERFTNAVMGQKNNFTSGRIYHTVINKERRGEYLGGTVQVIPHITDEIKKSVRQLDGSVDIAIIEIGGTVGDIEGLPFIEAIRQLRGDLGRDYTLFIHLTLVPYIKTAGEVKTKPTQHSVRELRADGIQPDILVCRTEVPLEENIKAKIALFCDVQQDAVINCVDVDSIYKLPIALHAEGLDSKILELLNIWTANPNIKPWQDLVENIQNPKNEVTIAITGKYVDLTEAYKSLHEALIHGGLANHTKVKLRYVSAEDLESGDPDSYLKGCDGILVPGGFGRRGVEGKIKAITYARENRIPFFGICLGMQLAVVEFARNMAGMSEAHSTELEPNSPDPVIYLTKEWFDYRTNKIQRRDENSDLGGTLRLGAYPCVLQQESHAGDAYGTQEVFERHRHRFEFNNDYRQQLIEKGLVISGTSPDGDLVEIVEIEDHPWFVGCQFHPEFKSKPMQAHPLFRDFISAAVANKKG.

The segment at 1 to 273 (MKNTTNTKRT…DSKILELLNI (273 aa)) is amidoligase domain. Position 21 (serine 21) interacts with CTP. Serine 21 contacts UTP. ATP-binding positions include 22-27 (SLGKGL) and aspartate 79. Residues aspartate 79 and glutamate 147 each contribute to the Mg(2+) site. Residues 154 to 156 (DIE), 194 to 199 (KTKPTQ), and lysine 230 contribute to the CTP site. UTP is bound by residues 194–199 (KTKPTQ) and lysine 230. The Glutamine amidotransferase type-1 domain occupies 298–551 (TIAITGKYVD…ISAAVANKKG (254 aa)). Glycine 360 is an L-glutamine binding site. The Nucleophile; for glutamine hydrolysis role is filled by cysteine 387. L-glutamine-binding positions include 388–391 (LGMQ), glutamate 411, and arginine 479. Residues histidine 524 and glutamate 526 contribute to the active site.

It belongs to the CTP synthase family. Homotetramer.

The enzyme catalyses UTP + L-glutamine + ATP + H2O = CTP + L-glutamate + ADP + phosphate + 2 H(+). It catalyses the reaction L-glutamine + H2O = L-glutamate + NH4(+). It carries out the reaction UTP + NH4(+) + ATP = CTP + ADP + phosphate + 2 H(+). Its pathway is pyrimidine metabolism; CTP biosynthesis via de novo pathway; CTP from UDP: step 2/2. Allosterically activated by GTP, when glutamine is the substrate; GTP has no effect on the reaction when ammonia is the substrate. The allosteric effector GTP functions by stabilizing the protein conformation that binds the tetrahedral intermediate(s) formed during glutamine hydrolysis. Inhibited by the product CTP, via allosteric rather than competitive inhibition. Catalyzes the ATP-dependent amination of UTP to CTP with either L-glutamine or ammonia as the source of nitrogen. Regulates intracellular CTP levels through interactions with the four ribonucleotide triphosphates. The polypeptide is CTP synthase (Desulfotalea psychrophila (strain LSv54 / DSM 12343)).